The sequence spans 147 residues: Helix-loop-helix protein 13 (147 aa).

The bHLH domain occupies 41–93 (EERQTASIRERKRMCSINVAFIELRNYIPTFPYEKRLSKIDTLNLAIAYINML).

In terms of tissue distribution, expressed in hermaphrodite dopaminergic neurons (ADE, CEP, and PDE).

It localises to the nucleus. Its subcellular location is the cytoplasm. In terms of biological role, transcriptional activator. Shown to have a role in the negative regulation of exit from L1 arrest and dauer diapause dependent on IIS signaling (insulin and insulin-like growth factor (IGF) signaling). Hypodermal expression is regulated by IIS/daf-16 while neuronal expression is not under the control of IIS/daf-16. This Caenorhabditis elegans protein is Helix-loop-helix protein 13.